The sequence spans 162 residues: Interleukin-15 (162 aa).

The signal sequence occupies residues 1–29 (MRILKPYLRSTSIQCYLCLLLNSHFLTEA). Residues 30 to 48 (GIHVFILGCISASLPKTEA) constitute a propeptide that is removed on maturation. 2 cysteine pairs are disulfide-bonded: Cys-83/Cys-133 and Cys-90/Cys-136. 4 N-linked (GlcNAc...) asparagine glycosylation sites follow: Asn-104, Asn-113, Asn-121, and Asn-127.

Belongs to the IL-15/IL-21 family.

The protein localises to the secreted. Functionally, cytokine that plays a major role in the development of inflammatory and protective immune responses to microbial invaders and parasites by modulating immune cells of both the innate and adaptive immune systems. Stimulates the proliferation of natural killer cells, T-cells and B-cells and promotes the secretion of several cytokines. In monocytes, induces the production of IL8 and monocyte chemotactic protein 1/CCL2, two chemokines that attract neutrophils and monocytes respectively to sites of infection. Unlike most cytokines, which are secreted in soluble form, IL15 is expressed in association with its high affinity IL15RA on the surface of IL15-producing cells and delivers signals to target cells that express IL2RB and IL2RG receptor subunits. Binding to its receptor triggers the phosphorylation of JAK1 and JAK3 and the recruitment and subsequent phosphorylation of signal transducer and activator of transcription-3/STAT3 and STAT5. In mast cells, induces the rapid tyrosine phosphorylation of STAT6 and thereby controls mast cell survival and release of cytokines such as IL4. The protein is Interleukin-15 (IL15) of Bos taurus (Bovine).